An 859-amino-acid polypeptide reads, in one-letter code: Fanconi anemia group B protein (859 aa).

Position 2 is an N-acetylthreonine (T2).

In terms of assembly, belongs to the multisubunit FA complex composed of FANCA, FANCB, FANCC, FANCE, FANCF, FANCG, FANCL/PHF9 and FANCM. The complex is not found in FA patients.

The protein localises to the nucleus. In terms of biological role, DNA repair protein required for FANCD2 ubiquitination. The sequence is that of Fanconi anemia group B protein (FANCB) from Homo sapiens (Human).